A 323-amino-acid chain; its full sequence is Transcription factor JunD (323 aa).

2 disordered regions span residues 138-173 (QNQL…APGL) and 197-221 (PFAA…QIVP). The span at 141–167 (LGGGGGPNGGAAAAGGGGGGGGGGGGE) shows a compositional bias: gly residues. Residues 198–212 (FAAPPPRLPPPPPPP) show a composition bias toward pro residues. The basic motif stretch occupies residues 242-269 (RIKAERKRLRNRIAASKCRKRKLERISR). Positions 242 to 305 (RIKAERKRLR…AQLKQKVLSH (64 aa)) constitute a bZIP domain. Positions 270 to 298 (LEEKVKSLKSQNTELASTASLLREQVAQL) are leucine-zipper.

The protein belongs to the bZIP family. Jun subfamily. In terms of assembly, binds DNA as a dimer.

It is found in the nucleus. The protein is Transcription factor JunD (JUND) of Gallus gallus (Chicken).